The chain runs to 212 residues: Peptide methionine sulfoxide reductase MsrA (212 aa).

Cys-52 is an active-site residue.

This sequence belongs to the MsrA Met sulfoxide reductase family.

It catalyses the reaction L-methionyl-[protein] + [thioredoxin]-disulfide + H2O = L-methionyl-(S)-S-oxide-[protein] + [thioredoxin]-dithiol. The catalysed reaction is [thioredoxin]-disulfide + L-methionine + H2O = L-methionine (S)-S-oxide + [thioredoxin]-dithiol. Functionally, has an important function as a repair enzyme for proteins that have been inactivated by oxidation. Catalyzes the reversible oxidation-reduction of methionine sulfoxide in proteins to methionine. The polypeptide is Peptide methionine sulfoxide reductase MsrA (Shigella boydii serotype 4 (strain Sb227)).